The following is a 367-amino-acid chain: GMP synthase [glutamine-hydrolyzing] subunit B (367 aa).

The 189-residue stretch at 2–190 folds into the GMPS ATP-PPase domain; sequence FDPASFVKEI…LKLPKEISER (189 aa). ATP is bound at residue 29 to 35; sequence SGGVDST.

As to quaternary structure, heterodimer composed of a glutamine amidotransferase subunit (A) and a GMP-binding subunit (B).

It catalyses the reaction XMP + L-glutamine + ATP + H2O = GMP + L-glutamate + AMP + diphosphate + 2 H(+). It participates in purine metabolism; GMP biosynthesis; GMP from XMP (L-Gln route): step 1/1. In terms of biological role, catalyzes the synthesis of GMP from XMP. The sequence is that of GMP synthase [glutamine-hydrolyzing] subunit B from Saccharolobus islandicus (strain M.16.27) (Sulfolobus islandicus).